Consider the following 224-residue polypeptide: Non-structural protein V (224 aa).

A compositionally biased stretch (polar residues) spans 55–65 (KNIQYPTTSHQ). Disordered stretches follow at residues 55–90 (KNIQ…GTGG) and 145–172 (TSTP…GHRR). Zn(2+) is bound by residues His170, Cys189, Cys193, Cys205, Cys207, Cys210, Cys214, and Cys217.

It belongs to the paramyxoviruses V protein family. In terms of assembly, interacts with host IFIH1/MDA5 and DHX58/LGP2. Forms with host DDB1, CUL4A, STAT1, STAT2 and STAT3 the mumps virus V-dependent complex (VDC).

Its subcellular location is the virion. It is found in the host cytoplasm. In terms of biological role, plays an essential role in the inhibition of host immune response. Prevents the establishment of cellular antiviral state by blocking interferon-alpha/beta (IFN-alpha/beta) production and signaling pathway. Interacts with host IFIH1/MDA5 and DHX58/LGP2 to inhibit the transduction pathway involved in the activation of IFN-beta promoter, thus protecting the virus against cell antiviral state. Blocks the type I and II interferon signaling pathways by interacting with host STAT1, STAT2 and STAT3, and mediating their ubiquitination and subsequent proteasomal degradation. The polypeptide is Non-structural protein V (Mumps virus genotype B (strain Miyahara vaccine) (MuV)).